We begin with the raw amino-acid sequence, 479 residues long: Neuronal acetylcholine receptor subunit alpha-9 (479 aa).

The signal sequence occupies residues 1–25; that stretch reads MNRPHSCLSFCWMYFAASGIRAVET. The Extracellular portion of the chain corresponds to 26–237; it reads ANGKYAQKLF…TFTLLLKRRS (212 aa). Asn-57 is a glycosylation site (N-linked (GlcNAc...) asparagine). An intrachain disulfide couples Cys-155 to Cys-169. N-linked (GlcNAc...) asparagine glycosylation is present at Asn-170. Positions 191 and 193 each coordinate Na(+). A disulfide bridge connects residues Cys-219 and Cys-220. A run of 3 helical transmembrane segments spans residues 238–262, 269–287, and 302–323; these read SFYI…FYLP, VSLG…LMVA, and YYIA…VMNI. At 324-457 the chain is on the cytoplasmic side; it reads HFCGAEARPV…WKKVAKVIDR (134 aa). Residues 458-476 form a helical membrane-spanning segment; that stretch reads FFMWIFFAMVFVMTVLIIA.

Belongs to the ligand-gated ion channel (TC 1.A.9) family. Acetylcholine receptor (TC 1.A.9.1) subfamily. Alpha-9/CHRNA9 sub-subfamily. Forms homo- or heterooligomeric channels in conjunction with CHRNA10. The native outer hair cell receptor may be composed of CHRNA9:CHRNA10 heterooligomers. Found in the stoichiometric form (CHRNA9)2:(CHRNA10)3. Detected in the nasal epithelium, in the outer hair cells of the cochlea, in the pars tuberalis of the hypophysis, and in the developing muscle of the tongue. Also expressed in the neurons of dorsal root ganglia.

It is found in the synaptic cell membrane. The protein localises to the cell membrane. It catalyses the reaction Ca(2+)(in) = Ca(2+)(out). It carries out the reaction Mg(2+)(in) = Mg(2+)(out). The enzyme catalyses K(+)(in) = K(+)(out). The catalysed reaction is Na(+)(in) = Na(+)(out). With respect to regulation, activated by a myriad of ligands such as acetylcholine. AChR activity is inhibited by the antagonist alpha-conotoxins RgIA and GeXXA, small disulfide-constrained peptides from cone snails. Its function is as follows. Component of neuronal acetylcholine receptors (nAChRs) that function as pentameric, ligand-gated cation channels with high calcium permeability among other activities. nAChRs are excitatory neurotrasnmitter receptors formed by a collection of nAChR subunits known to mediate synaptic transmission in the nervous system and the neuromuscular junction. Each nAchR subunit confers differential attributes to channel properties, including activation, deactivation and desensitization kinetics, pH sensitivity, cation permeability, and binding to allosteric modulators. Forms either homopentamers or heteropentamers with CHRNA10. Expressed in the inner ear, in sympathetic neurons and in other non-neuronal cells, such as skin keratinocytes and lymphocytes. nAChR formed by CHRNA9:CHRNA10 mediate central nervous system control of auditory and vestibular sensory processing. The channel is permeable to a range of divalent cations including calcium, the influx of which may activate a potassium current which hyperpolarizes the cell membrane. In the ear, mediates synaptic transmission between efferent olivocochlear fibers and hair cells of the cochlea, this may lead to a reduction in basilar membrane motion, altering the activity of auditory nerve fibers and reducing the range of dynamic hearing. This may protect against acoustic trauma. May also regulate keratinocyte adhesion. This Rattus norvegicus (Rat) protein is Neuronal acetylcholine receptor subunit alpha-9 (Chrna9).